Consider the following 344-residue polypeptide: Dihydroorotase (344 aa).

Residues H14 and H16 each contribute to the Zn(2+) site. Substrate-binding positions include 16–18 (HLR) and N42. 3 residues coordinate Zn(2+): K100, H137, and H175. K100 carries the post-translational modification N6-carboxylysine. Residue H137 coordinates substrate. Substrate is bound at residue L220. Zn(2+) is bound at residue D248. Residue D248 is part of the active site. H252 and A264 together coordinate substrate.

Belongs to the metallo-dependent hydrolases superfamily. DHOase family. Class II DHOase subfamily. Homodimer. It depends on Zn(2+) as a cofactor.

It catalyses the reaction (S)-dihydroorotate + H2O = N-carbamoyl-L-aspartate + H(+). The protein operates within pyrimidine metabolism; UMP biosynthesis via de novo pathway; (S)-dihydroorotate from bicarbonate: step 3/3. In terms of biological role, catalyzes the reversible cyclization of carbamoyl aspartate to dihydroorotate. This chain is Dihydroorotase, found in Ralstonia pickettii (strain 12J).